The sequence spans 243 residues: Zinc import ATP-binding protein ZnuC (243 aa).

In terms of domain architecture, ABC transporter spans 4-219; sequence IAAHHLAVRR…PEYRALFGHG (216 aa). 36–43 contributes to the ATP binding site; sequence GPNGSGKS.

It belongs to the ABC transporter superfamily. Zinc importer (TC 3.A.1.15.5) family. As to quaternary structure, the complex is composed of two ATP-binding proteins (ZnuC), two transmembrane proteins (ZnuB) and a solute-binding protein (ZnuA).

The protein localises to the cell inner membrane. The enzyme catalyses Zn(2+)(out) + ATP(in) + H2O(in) = Zn(2+)(in) + ADP(in) + phosphate(in) + H(+)(in). Its function is as follows. Part of the ABC transporter complex ZnuABC involved in zinc import. Responsible for energy coupling to the transport system. The protein is Zinc import ATP-binding protein ZnuC of Cereibacter sphaeroides (strain ATCC 17023 / DSM 158 / JCM 6121 / CCUG 31486 / LMG 2827 / NBRC 12203 / NCIMB 8253 / ATH 2.4.1.) (Rhodobacter sphaeroides).